We begin with the raw amino-acid sequence, 120 residues long: NAD(P)H-quinone oxidoreductase subunit 3, chloroplastic (120 aa).

3 consecutive transmembrane segments (helical) span residues 9-29, 64-84, and 88-108; these read IFWAFLMISSVIPILAFLISG, MFALVFVVFDVETVFLYPWAV, and ILGVYVFIEALIFVLIPVVGS.

The protein belongs to the complex I subunit 3 family. As to quaternary structure, NDH is composed of at least 16 different subunits, 5 of which are encoded in the nucleus.

It localises to the plastid. The protein localises to the chloroplast thylakoid membrane. It catalyses the reaction a plastoquinone + NADH + (n+1) H(+)(in) = a plastoquinol + NAD(+) + n H(+)(out). The catalysed reaction is a plastoquinone + NADPH + (n+1) H(+)(in) = a plastoquinol + NADP(+) + n H(+)(out). NDH shuttles electrons from NAD(P)H:plastoquinone, via FMN and iron-sulfur (Fe-S) centers, to quinones in the photosynthetic chain and possibly in a chloroplast respiratory chain. The immediate electron acceptor for the enzyme in this species is believed to be plastoquinone. Couples the redox reaction to proton translocation, and thus conserves the redox energy in a proton gradient. The chain is NAD(P)H-quinone oxidoreductase subunit 3, chloroplastic from Nymphaea alba (White water-lily).